A 611-amino-acid polypeptide reads, in one-letter code: Dihydroxy-acid dehydratase (611 aa).

Asp81 provides a ligand contact to Mg(2+). Residue Cys122 participates in [2Fe-2S] cluster binding. Mg(2+) is bound by residues Asp123 and Lys124. Lys124 carries the N6-carboxylysine modification. Position 195 (Cys195) interacts with [2Fe-2S] cluster. Residue Glu491 participates in Mg(2+) binding. Ser517 acts as the Proton acceptor in catalysis.

This sequence belongs to the IlvD/Edd family. As to quaternary structure, homodimer. It depends on [2Fe-2S] cluster as a cofactor. Requires Mg(2+) as cofactor.

The catalysed reaction is (2R)-2,3-dihydroxy-3-methylbutanoate = 3-methyl-2-oxobutanoate + H2O. It catalyses the reaction (2R,3R)-2,3-dihydroxy-3-methylpentanoate = (S)-3-methyl-2-oxopentanoate + H2O. It functions in the pathway amino-acid biosynthesis; L-isoleucine biosynthesis; L-isoleucine from 2-oxobutanoate: step 3/4. The protein operates within amino-acid biosynthesis; L-valine biosynthesis; L-valine from pyruvate: step 3/4. Functionally, functions in the biosynthesis of branched-chain amino acids. Catalyzes the dehydration of (2R,3R)-2,3-dihydroxy-3-methylpentanoate (2,3-dihydroxy-3-methylvalerate) into 2-oxo-3-methylpentanoate (2-oxo-3-methylvalerate) and of (2R)-2,3-dihydroxy-3-methylbutanoate (2,3-dihydroxyisovalerate) into 2-oxo-3-methylbutanoate (2-oxoisovalerate), the penultimate precursor to L-isoleucine and L-valine, respectively. The protein is Dihydroxy-acid dehydratase of Histophilus somni (strain 129Pt) (Haemophilus somnus).